Consider the following 466-residue polypeptide: Adenosylhomocysteinase (466 aa).

Substrate contacts are provided by Thr57, Asp132, and Glu192. 193-195 (TTT) provides a ligand contact to NAD(+). Residues Lys222 and Asp226 each contribute to the substrate site. NAD(+)-binding positions include Asn227, 256–261 (GYGDVG), Glu279, Asn314, 335–337 (IGH), and Asn380.

Belongs to the adenosylhomocysteinase family. Requires NAD(+) as cofactor.

Its subcellular location is the cytoplasm. The catalysed reaction is S-adenosyl-L-homocysteine + H2O = L-homocysteine + adenosine. Its pathway is amino-acid biosynthesis; L-homocysteine biosynthesis; L-homocysteine from S-adenosyl-L-homocysteine: step 1/1. Functionally, may play a key role in the regulation of the intracellular concentration of adenosylhomocysteine. The protein is Adenosylhomocysteinase of Rhizobium etli (strain ATCC 51251 / DSM 11541 / JCM 21823 / NBRC 15573 / CFN 42).